The sequence spans 263 residues: Imidazole glycerol phosphate synthase subunit HisF (263 aa).

Active-site residues include aspartate 22 and aspartate 141.

Belongs to the HisA/HisF family. Heterodimer of HisH and HisF.

It is found in the cytoplasm. The catalysed reaction is 5-[(5-phospho-1-deoxy-D-ribulos-1-ylimino)methylamino]-1-(5-phospho-beta-D-ribosyl)imidazole-4-carboxamide + L-glutamine = D-erythro-1-(imidazol-4-yl)glycerol 3-phosphate + 5-amino-1-(5-phospho-beta-D-ribosyl)imidazole-4-carboxamide + L-glutamate + H(+). The protein operates within amino-acid biosynthesis; L-histidine biosynthesis; L-histidine from 5-phospho-alpha-D-ribose 1-diphosphate: step 5/9. In terms of biological role, IGPS catalyzes the conversion of PRFAR and glutamine to IGP, AICAR and glutamate. The HisF subunit catalyzes the cyclization activity that produces IGP and AICAR from PRFAR using the ammonia provided by the HisH subunit. The sequence is that of Imidazole glycerol phosphate synthase subunit HisF from Clavibacter michiganensis subsp. michiganensis (strain NCPPB 382).